We begin with the raw amino-acid sequence, 62 residues long: Large ribosomal subunit protein bL28 (62 aa).

The protein belongs to the bacterial ribosomal protein bL28 family.

This Carboxydothermus hydrogenoformans (strain ATCC BAA-161 / DSM 6008 / Z-2901) protein is Large ribosomal subunit protein bL28.